The primary structure comprises 245 residues: Tetraspanin-6 (245 aa).

Residues 1-19 (MASPSRRLQTKPVITCFKS) lie on the Cytoplasmic side of the membrane. A helical membrane pass occupies residues 20–40 (VLLIYTFIFWITGVILLAVGI). Residues 41 to 59 (WGKVSLENYFSLLNEKATN) are Extracellular-facing. Residues 60 to 80 (VPFVLIGTGTVIILLGTFGCF) form a helical membrane-spanning segment. At 81-93 (ATCRASAWMLKLY) the chain is on the cytoplasmic side. The helical transmembrane segment at 94-114 (AMFLTLIFLVELVAAIIGFVF) threads the bilayer. Residues 115 to 208 (RHEIKNSLKN…IMVMTIIESE (94 aa)) lie on the Extracellular side of the membrane. A glycan (N-linked (GlcNAc...) asparagine) is linked at asparagine 134. The helical transmembrane segment at 209–229 (MGVVAGISFGVACFQLIGIFL) threads the bilayer. The Cytoplasmic portion of the chain corresponds to 230–245 (AYCLSRAITNNQYEIV).

It belongs to the tetraspanin (TM4SF) family.

Its subcellular location is the membrane. In Bos taurus (Bovine), this protein is Tetraspanin-6 (TSPAN6).